The primary structure comprises 1093 residues: Error-prone DNA polymerase (1093 aa).

The tract at residues 1–55 is disordered; that stretch reads MGWFNGPPSWAEMERVLDSKPRRAGESAAPEPDGPLSRGRATYRPPDEGRAARSS. Basic and acidic residues predominate over residues 12 to 25; it reads EMERVLDSKPRRAG.

It belongs to the DNA polymerase type-C family. DnaE2 subfamily.

Its subcellular location is the cytoplasm. It carries out the reaction DNA(n) + a 2'-deoxyribonucleoside 5'-triphosphate = DNA(n+1) + diphosphate. Functionally, DNA polymerase involved in damage-induced mutagenesis and translesion synthesis (TLS). It is not the major replicative DNA polymerase. The sequence is that of Error-prone DNA polymerase from Mycolicibacterium paratuberculosis (strain ATCC BAA-968 / K-10) (Mycobacterium paratuberculosis).